A 287-amino-acid polypeptide reads, in one-letter code: Nucleotide-binding protein Dtpsy_0831 (287 aa).

10-17 provides a ligand contact to ATP; that stretch reads GMSGSGKS. Residue 59–62 participates in GTP binding; that stretch reads DVRS.

This sequence belongs to the RapZ-like family.

Displays ATPase and GTPase activities. The chain is Nucleotide-binding protein Dtpsy_0831 from Acidovorax ebreus (strain TPSY) (Diaphorobacter sp. (strain TPSY)).